The sequence spans 359 residues: Alanine racemase (359 aa).

Residue Lys35 is the Proton acceptor; specific for D-alanine of the active site. Lys35 carries the post-translational modification N6-(pyridoxal phosphate)lysine. Arg130 contributes to the substrate binding site. The Proton acceptor; specific for L-alanine role is filled by Tyr255. Met303 lines the substrate pocket.

This sequence belongs to the alanine racemase family. Requires pyridoxal 5'-phosphate as cofactor.

It carries out the reaction L-alanine = D-alanine. Its pathway is amino-acid biosynthesis; D-alanine biosynthesis; D-alanine from L-alanine: step 1/1. In terms of biological role, catalyzes the interconversion of L-alanine and D-alanine. May also act on other amino acids. This is Alanine racemase (alr) from Janthinobacterium sp. (strain Marseille) (Minibacterium massiliensis).